A 156-amino-acid polypeptide reads, in one-letter code: METSEEENFGVAVSSPSDAEFDAVVGYLEDIIMDDDFQSIQRTFMEKHYQEFDDSEENKLIYTSIFNEYISLIEKYIEEKLLDRIPGFNMTAFTMSLQQHKDEMAGDIFDMLLTFTDFLAFKEMFLDYRAEKEGRSLDLSGGLVVTSLNKSSVSSS.

It belongs to the ARL2BP family.

Its subcellular location is the cytoplasm. It localises to the mitochondrion intermembrane space. The protein resides in the cytoskeleton. The protein localises to the microtubule organizing center. It is found in the centrosome. Its subcellular location is the nucleus. It localises to the spindle. The protein resides in the cilium basal body. Functionally, plays a role as an effector of the ADP-ribosylation factor-like protein 2, ARL2. The chain is ADP-ribosylation factor-like protein 2-binding protein (ARL2BP) from Gallus gallus (Chicken).